The chain runs to 327 residues: UPF0285 protein Maeo_0978 (327 aa).

The protein belongs to the UPF0285 family.

The chain is UPF0285 protein Maeo_0978 from Methanococcus aeolicus (strain ATCC BAA-1280 / DSM 17508 / OCM 812 / Nankai-3).